Consider the following 1003-residue polypeptide: cGMP-dependent protein kinase (1003 aa).

Residues 1–141 (MGACSSKAQH…KAIKQQEDTQ (141 aa)) form a disordered region. Glycine 2 carries N-myristoyl glycine lipidation. The S-palmitoyl cysteine moiety is linked to residue cysteine 4. Residues 69 to 85 (EQQQQQQQQQQQQQEQQ) are compositionally biased toward low complexity. Composition is skewed to basic and acidic residues over residues 86-109 (QHPEHQQSEKQQQHGEEQQQERKP) and 127-141 (ERKVQKAIKQQEDTQ). CNMP-binding domain stretches follow at residues 173 to 289 (VCSS…FLAS), 292 to 391 (FFEM…RVLG), 411 to 548 (VFAS…ATLG), and 570 to 669 (IFRY…LQIV). 3',5'-cyclic GMP is bound by residues glycine 237, glutamate 238, arginine 247, and threonine 248. Arginine 625, glycine 634, glutamate 635, alanine 637, arginine 644, and serine 645 together coordinate 3',5'-cyclic GMP. A Protein kinase domain is found at 693–950 (LNVVRVVGRG…YKDIKEHAFF (258 aa)). ATP-binding positions include 699-707 (VGRGTFGTV) and lysine 722. Aspartate 816 (proton acceptor) is an active-site residue. In terms of domain architecture, AGC-kinase C-terminal spans 951–1003 (SDFDWDRLAGRDLSPPLLPKGEIYAEDAEEGGLDIEEDEGIELEDEYEWDKDF).

The protein belongs to the protein kinase superfamily. AGC Ser/Thr protein kinase family. cGMP subfamily. In terms of assembly, monomer. It depends on Mg(2+) as a cofactor.

It localises to the cell membrane. The protein resides in the cytoplasm. It catalyses the reaction L-seryl-[protein] + ATP = O-phospho-L-seryl-[protein] + ADP + H(+). The catalysed reaction is L-threonyl-[protein] + ATP = O-phospho-L-threonyl-[protein] + ADP + H(+). Its activity is regulated as follows. Activated by cGMP. The cGMP-binding domains acts cooperatively to activate PKG. Inhibited by the antiparasitic small molecule 4-[2-(4-fluorophenyl)-5-(1-methylpiperidine-4-yl)-1Hpyrrol- 3-yl]pyridine (compound 1). Functionally, serine/threonine protein kinase which acts as a downstream effector of the second messenger cGMP. This chain is cGMP-dependent protein kinase, found in Eimeria tenella (Coccidian parasite).